The following is a 562-amino-acid chain: UPF0649 protein C1442.02 (562 aa).

A phosphoserine mark is found at serine 285 and serine 286. The tract at residues 288–308 (DEEIAKNADVPAEVDNNSTKA) is disordered.

It belongs to the UPF0649 family.

The protein localises to the cytoplasm. Its subcellular location is the nucleus. This chain is UPF0649 protein C1442.02, found in Schizosaccharomyces pombe (strain 972 / ATCC 24843) (Fission yeast).